We begin with the raw amino-acid sequence, 865 residues long: Leucine--tRNA ligase (865 aa).

A 'HIGH' region motif is present at residues 44–54 (PYPSGRIHVGH). The 'KMSKS' region motif lies at 625-629 (KMSKS). Lys-628 is a binding site for ATP.

Belongs to the class-I aminoacyl-tRNA synthetase family.

Its subcellular location is the cytoplasm. It catalyses the reaction tRNA(Leu) + L-leucine + ATP = L-leucyl-tRNA(Leu) + AMP + diphosphate. The sequence is that of Leucine--tRNA ligase from Maricaulis maris (strain MCS10) (Caulobacter maris).